Here is a 347-residue protein sequence, read N- to C-terminus: L-threonine 3-dehydrogenase (347 aa).

Cysteine 43 is a binding site for Zn(2+). Active-site charge relay system residues include threonine 45 and histidine 48. Residues histidine 68, glutamate 69, cysteine 98, cysteine 101, cysteine 104, and cysteine 112 each coordinate Zn(2+). NAD(+)-binding positions include isoleucine 180, aspartate 200, arginine 205, 267-269, and 292-293; these read LSL and IT.

The protein belongs to the zinc-containing alcohol dehydrogenase family. Homotetramer. It depends on Zn(2+) as a cofactor.

Its subcellular location is the cytoplasm. It carries out the reaction L-threonine + NAD(+) = (2S)-2-amino-3-oxobutanoate + NADH + H(+). Its pathway is amino-acid degradation; L-threonine degradation via oxydo-reductase pathway; glycine from L-threonine: step 1/2. Functionally, catalyzes the NAD(+)-dependent oxidation of L-threonine to 2-amino-3-ketobutyrate. This chain is L-threonine 3-dehydrogenase, found in Bacillus subtilis (strain 168).